An 891-amino-acid polypeptide reads, in one-letter code: Transportin-1 (891 aa).

HEAT repeat units lie at residues 14–40, 45–83, 92–125, 131–168, 178–208, 221–248, 260–287, 303–381, 389–420, 432–459, 477–510, 518–551, 559–597, 605–653, 664–695, 703–740, 748–784, 792–825, and 834–866; these read GLRE…QQLQ, FPDF…ATFS, YVKS…IVRV, LFQA…LDVD, NVFM…QYIV, YLQG…VQLI, KNVT…FWSA, PRLI…LSNV, TLMP…GAIA, PQIV…TLSR, FDKI…EEEA, LGII…ADAV, KYLD…QALG, EPVF…GLGA, LRDI…RVCP, QEFL…IKIG, ITVV…WVCP, DHFM…VAAN, and TFIC…KQML. Positions 35 to 103 constitute an Importin N-terminal domain; it reads IWQQLQHYSQ…KSELLPCIGA (69 aa). Over residues 317 to 330 the composition is skewed to acidic residues; sequence DDDESLADAEEDES. Residues 317 to 337 form a disordered region; that stretch reads DDDESLADAEEDESFPDRDQD.

It belongs to the importin beta family. Importin beta-2 subfamily.

It localises to the cytoplasm. The protein resides in the nucleus. It is found in the nucleoplasm. Its function is as follows. Functions in nuclear protein import as nuclear transport receptor. Serves as receptor for nuclear localization signals (NLS) in cargo substrates. Is thought to mediate docking of the importin/substrate complex to the nuclear pore complex (NPC) through binding to nucleoporin and the complex is subsequently translocated through the pore by an energy requiring, Ran-dependent mechanism. At the nucleoplasmic side of the NPC, Ran binds to the importin, the importin/substrate complex dissociates and importin is re-exported from the nucleus to the cytoplasm where GTP hydrolysis releases Ran. The directionality of nuclear import is thought to be conferred by an asymmetric distribution of the GTP- and GDP-bound forms of Ran between the cytoplasm and nucleus. This is Transportin-1 (TRN1) from Oryza sativa subsp. japonica (Rice).